We begin with the raw amino-acid sequence, 187 residues long: Pyridoxal 5'-phosphate synthase subunit PdxT (187 aa).

An L-glutamine-binding site is contributed by 47-49; it reads GES. Cysteine 76 (nucleophile) is an active-site residue. Residues arginine 102 and 128-129 each bind L-glutamine; that span reads IR. Catalysis depends on charge relay system residues histidine 165 and glutamate 167.

It belongs to the glutaminase PdxT/SNO family. In the presence of PdxS, forms a dodecamer of heterodimers. Only shows activity in the heterodimer.

It carries out the reaction aldehydo-D-ribose 5-phosphate + D-glyceraldehyde 3-phosphate + L-glutamine = pyridoxal 5'-phosphate + L-glutamate + phosphate + 3 H2O + H(+). The catalysed reaction is L-glutamine + H2O = L-glutamate + NH4(+). Its pathway is cofactor biosynthesis; pyridoxal 5'-phosphate biosynthesis. Functionally, catalyzes the hydrolysis of glutamine to glutamate and ammonia as part of the biosynthesis of pyridoxal 5'-phosphate. The resulting ammonia molecule is channeled to the active site of PdxS. The chain is Pyridoxal 5'-phosphate synthase subunit PdxT from Methanococcus vannielii (strain ATCC 35089 / DSM 1224 / JCM 13029 / OCM 148 / SB).